A 268-amino-acid polypeptide reads, in one-letter code: Ribonuclease P protein subunit p30 (268 aa).

An N-acetylalanine modification is found at alanine 2. The tract at residues 247-268 (KPRPSEGDEDCLPASKKAKCEG) is disordered. Phosphoserine is present on serine 251.

The protein belongs to the eukaryotic/archaeal RNase P protein component 3 family. In terms of assembly, component of nuclear RNase P and RNase MRP ribonucleoproteins. RNase P consists of a catalytic RNA moiety and about 10 protein subunits; POP1, POP4, POP5, POP7, RPP14, RPP21, RPP25, RPP30, RPP38 and RPP40. Within the RNase P complex, POP1, POP7 and RPP25 form the 'finger' subcomplex, POP5, RPP14, RPP40 and homodimeric RPP30 form the 'palm' subcomplex, and RPP21, POP4 and RPP38 form the 'wrist' subcomplex. All subunits of the RNase P complex interact with the catalytic RNA. Several subunits of RNase P are also part of the RNase MRP complex. RNase MRP consists of a catalytic RNA moiety and about 8 protein subunits; POP1, POP7, RPP25, RPP30, RPP38, RPP40 and possibly also POP4 and POP5.

Its subcellular location is the nucleus. The protein localises to the nucleolus. In terms of biological role, component of ribonuclease P, a ribonucleoprotein complex that generates mature tRNA molecules by cleaving their 5'-ends. Also a component of the MRP ribonuclease complex, which cleaves pre-rRNA sequences. This chain is Ribonuclease P protein subunit p30 (RPP30), found in Homo sapiens (Human).